We begin with the raw amino-acid sequence, 768 residues long: Eukaryotic elongation factor 2 kinase (768 aa).

The span at 1 to 17 (MTIDTTNESDNSPTNSP) shows a compositional bias: polar residues. Positions 1–21 (MTIDTTNESDNSPTNSPGLEA) are disordered. An Alpha-type protein kinase domain is found at 102–309 (RYSAIRKQWT…ICETMDLSNF (208 aa)). 279-284 (GDGNLG) contributes to the ATP binding site. The span at 402 to 411 (SEDEEDEEED) shows a compositional bias: acidic residues. Residues 402–446 (SEDEEDEEEDYPRSEKSGNSQKSRRSRMSISTRSSGDESASRPRK) are disordered.

It belongs to the protein kinase superfamily. Alpha-type protein kinase family. Monomer or homodimer. Interacts with cmd-1 in the presence of Ca(2+).

It carries out the reaction [translation elongation factor 2] + ATP = [translation elongation factor 2]-phosphate + ADP + H(+). With respect to regulation, calcium(2+)/calmodulin dependent activity. Undergoes calcium/calmodulin-dependent intramolecular autophosphorylation, and this results in it becoming partially calcium/calmodulin-independent. Phosphorylates elongation factor-2 (eEF-2) at two threonine residues that are conserved in all eukaryotes and are located within a GTP-binding domain. Calcium(2+)/calmodulin dependent activity. Inactivates eEF-2 by catalyzing its phosphorylation. eEF-2 catalyzes the movement of the ribosome along mRNA during translation in eukaryotic cells. The polypeptide is Eukaryotic elongation factor 2 kinase (efk-1) (Caenorhabditis elegans).